The primary structure comprises 409 residues: SPI-1 type 3 secretion system translocon protein SctB (409 aa).

The chain crosses the membrane as a helical span at residues 119 to 140; the sequence is ISGMSSSAVALLAAANTLMLTL. The span at 350–368 shows a compositional bias: polar residues; the sequence is ERSEQQISQVNNRVASTAS. Positions 350–378 are disordered; that stretch reads ERSEQQISQVNNRVASTASDEARESSRKS.

Belongs to the SctB/SipC family. The core secretion machinery of the T3SS is composed of approximately 20 different proteins, including cytoplasmic components, a base, an export apparatus and a needle. This subunit is involved in the formation of a pore, called the translocon, in host membrane.

It localises to the secreted. The protein localises to the host membrane. Its function is as follows. Component of the type III secretion system 1 (SPI-1 T3SS), also called injectisome, which is used to inject bacterial effector proteins into eukaryotic host cells. SipB/SctE1 and SipC/SctB1 are inserted into the host membrane where they form a pore and allow the translocation of effector proteins into the cytosol of target cells. This is SPI-1 type 3 secretion system translocon protein SctB from Salmonella typhi.